We begin with the raw amino-acid sequence, 346 residues long: Elongation factor Ts (346 aa).

The segment at 80-83 is involved in Mg(2+) ion dislocation from EF-Tu; the sequence is TDFV.

The protein belongs to the EF-Ts family.

It localises to the cytoplasm. Its function is as follows. Associates with the EF-Tu.GDP complex and induces the exchange of GDP to GTP. It remains bound to the aminoacyl-tRNA.EF-Tu.GTP complex up to the GTP hydrolysis stage on the ribosome. The sequence is that of Elongation factor Ts from Streptococcus pneumoniae (strain 70585).